A 195-amino-acid chain; its full sequence is MQNLNDSSISVDLTIDLSLSGFTFDLMKDSIDSKMIDLIMDCDTWRNSIVSWFDCILMQPNLTCPQIVRKNRFFSMGLLFTNDLSIRQMNKEWRKKDESTDVLSFPAIDEHIVLPPNQFLELGDIIVSVETAFKQAKIHNHSLMHELRWLVSHGFLHLLGWDHPSSASLNEMLSFQELLLKTPNGSPLRNSMRDY.

The Zn(2+) site is built by H153, H157, and H163.

It belongs to the endoribonuclease YbeY family. Zn(2+) is required as a cofactor.

The protein localises to the cytoplasm. Single strand-specific metallo-endoribonuclease involved in late-stage 70S ribosome quality control and in maturation of the 3' terminus of the 16S rRNA. The protein is Endoribonuclease YbeY of Prochlorococcus marinus (strain SARG / CCMP1375 / SS120).